The following is a 481-amino-acid chain: Cerebral cavernous malformations 2 protein-like (481 aa).

Disordered regions lie at residues 161–193 and 214–290; these read PVPA…GTAE and EARA…DPQN. Residues 184-193 are compositionally biased toward basic and acidic residues; it reads PEKRRVGTAE. A compositionally biased stretch (gly residues) spans 214-223; that stretch reads EARAAGGGGS. A compositionally biased stretch (basic and acidic residues) spans 237–251; the sequence is WERRQTFSGSWERRH.

Belongs to the CCM2 family.

This Mus musculus (Mouse) protein is Cerebral cavernous malformations 2 protein-like (Ccm2l).